Consider the following 262-residue polypeptide: uncharacterized protein (262 aa).

The 65-residue stretch at 6-70 folds into the S4 RNA-binding domain; the sequence is LRINQFLAHY…LKNKKFSVLV (65 aa). Aspartate 108 functions as the Nucleophile in the catalytic mechanism.

The protein belongs to the pseudouridine synthase RsuA family.

The catalysed reaction is a uridine in RNA = a pseudouridine in RNA. This is an uncharacterized protein from Helicobacter pylori (strain J99 / ATCC 700824) (Campylobacter pylori J99).